Consider the following 523-residue polypeptide: GMP synthase [glutamine-hydrolyzing] (523 aa).

Residues 8 to 205 enclose the Glutamine amidotransferase type-1 domain; it reads KILILDFGSQ…VVGICGCECK (198 aa). The active-site Nucleophile is the Cys-85. Residues His-179 and Glu-181 contribute to the active site. The GMPS ATP-PPase domain maps to 206 to 398; that stretch reads WTAENIIERR…LGLPAEMLNR (193 aa). Position 233-239 (233-239) interacts with ATP; the sequence is SGGVDSS.

Homodimer.

The enzyme catalyses XMP + L-glutamine + ATP + H2O = GMP + L-glutamate + AMP + diphosphate + 2 H(+). Its pathway is purine metabolism; GMP biosynthesis; GMP from XMP (L-Gln route): step 1/1. In terms of biological role, catalyzes the synthesis of GMP from XMP. The polypeptide is GMP synthase [glutamine-hydrolyzing] (Actinobacillus pleuropneumoniae serotype 5b (strain L20)).